The primary structure comprises 554 residues: 3-(3-hydroxy-phenyl)propionate/3-hydroxycinnamic acid hydroxylase (554 aa).

FAD contacts are provided by residues glutamine 17 to lysine 46 and phenylalanine 285 to aspartate 295.

This sequence belongs to the PheA/TfdB FAD monooxygenase family. FAD serves as cofactor.

It carries out the reaction 3-(3-hydroxyphenyl)propanoate + NADH + O2 + H(+) = 3-(2,3-dihydroxyphenyl)propanoate + NAD(+) + H2O. The catalysed reaction is (2E)-3-(3-hydroxyphenyl)prop-2-enoate + NADH + O2 + H(+) = (2E)-3-(2,3-dihydroxyphenyl)prop-2-enoate + NAD(+) + H2O. It participates in aromatic compound metabolism; 3-phenylpropanoate degradation. Catalyzes the insertion of one atom of molecular oxygen into position 2 of the phenyl ring of 3-(3-hydroxyphenyl)propionate (3-HPP) and hydroxycinnamic acid (3HCI). In Escherichia coli (strain K12 / DH10B), this protein is 3-(3-hydroxy-phenyl)propionate/3-hydroxycinnamic acid hydroxylase.